We begin with the raw amino-acid sequence, 402 residues long: MDRRVVITGIGGLCGLGTDAPSIWKEMREGRSAIGPIVTSELHGLTGTIGAEIKTLPEHDIDRKQLVTMDRFSLLAVLAAREAMRQAGLSCDERNAYRFGAIVGVGGSGWEAIEASYRALLLNGARRAGVMDVPKAMPSAAAGQVSMSLGLRGPVFGVTSACASANHAIASAVDQIRCGRADVMLAGGSDAPFVFCVVKAWEAMRVIAPDTCRPFSSDRRGLVLGEGAGMAVLESYEHATARGATIIAEIAGIGLSADAFNLVSPAVEGPEAAMRACLADAGLNVQDVDYINAHGTGTKANDRMETEAIKRVFGGHANSMSISSTKSMHAHCLGAASALEMIACVMAIQEGVVPPTANYREPDPDCDLDVTPNVARERKVRVALSNAFAMAGMNAVLAFRQV.

Residues 2–401 (DRRVVITGIG…GMNAVLAFRQ (400 aa)) form the Ketosynthase family 3 (KS3) domain. Residues Cys162, His294, and His331 each act as for beta-ketoacyl synthase activity in the active site. The chain crosses the membrane as a helical span at residues 329-348 (HAHCLGAASALEMIACVMAI).

This sequence belongs to the thiolase-like superfamily. Beta-ketoacyl-ACP synthases family.

The protein localises to the cell inner membrane. Proposed to synthesize NOD factor fatty acyl chain. Involved in the synthesis of a highly unsaturated fatty acid moiety, which forms part of a lipo-oligosaccharide that is responsible for host specificity. This chain is Nodulation protein E (nodE), found in Rhizobium sp. (strain N33).